A 1013-amino-acid polypeptide reads, in one-letter code: Probable beta-galactosidase B (1013 aa).

The signal sequence occupies residues 1-21 (MTRILNCLLVLLACLGVSSKA). Y90 serves as a coordination point for substrate. An N-linked (GlcNAc...) asparagine glycan is attached at N100. N135, A136, E137, and N195 together coordinate substrate. Catalysis depends on E196, which acts as the Proton donor. A glycan (N-linked (GlcNAc...) asparagine) is linked at N211. A substrate-binding site is contributed by Y265. C271 and C324 form a disulfide bridge. The active-site Nucleophile is the E308. Y373 is a binding site for substrate. N411, N442, N456, N626, N735, N768, and N775 each carry an N-linked (GlcNAc...) asparagine glycan.

It belongs to the glycosyl hydrolase 35 family.

Its subcellular location is the secreted. The enzyme catalyses Hydrolysis of terminal non-reducing beta-D-galactose residues in beta-D-galactosides.. Its function is as follows. Cleaves beta-linked terminal galactosyl residues from gangliosides, glycoproteins, and glycosaminoglycans. This chain is Probable beta-galactosidase B (lacB), found in Penicillium rubens (strain ATCC 28089 / DSM 1075 / NRRL 1951 / Wisconsin 54-1255) (Penicillium chrysogenum).